The sequence spans 491 residues: Tryptophan 5-hydroxylase 2 (491 aa).

Ser19 is subject to Phosphoserine. The segment at 33–63 (NLTVNKSNSGKNDDKKGNKGSSRSETAPDSG) is disordered. The ACT domain maps to 66-141 (AVVFSLRNEV…TIVTLNPPEN (76 aa)). Fe cation-binding residues include His319, His324, and Glu364.

Belongs to the biopterin-dependent aromatic amino acid hydroxylase family. In terms of assembly, interacts with DNAJC12. It depends on Fe(2+) as a cofactor.

The enzyme catalyses (6R)-L-erythro-5,6,7,8-tetrahydrobiopterin + L-tryptophan + O2 = 5-hydroxy-L-tryptophan + (4aS,6R)-4a-hydroxy-L-erythro-5,6,7,8-tetrahydrobiopterin. Its pathway is aromatic compound metabolism; serotonin biosynthesis; serotonin from L-tryptophan: step 1/2. The protein is Tryptophan 5-hydroxylase 2 (TPH2) of Equus caballus (Horse).